The primary structure comprises 181 residues: CDP-diacylglycerol--glycerol-3-phosphate 3-phosphatidyltransferase (181 aa).

Helical transmembrane passes span 8 to 28, 35 to 55, 64 to 84, and 148 to 168; these read PNYLTIARIMVIPVIILLFYI, KLGALLFVLASITDFFDGYIA, FGKMFDPIADKLLVGCVTIML, and IIYLDIVGEIILWIAAFLTII.

The protein belongs to the CDP-alcohol phosphatidyltransferase class-I family.

It is found in the cell membrane. The enzyme catalyses a CDP-1,2-diacyl-sn-glycerol + sn-glycerol 3-phosphate = a 1,2-diacyl-sn-glycero-3-phospho-(1'-sn-glycero-3'-phosphate) + CMP + H(+). It participates in phospholipid metabolism; phosphatidylglycerol biosynthesis; phosphatidylglycerol from CDP-diacylglycerol: step 1/2. Functionally, this protein catalyzes the committed step to the synthesis of the acidic phospholipids. The polypeptide is CDP-diacylglycerol--glycerol-3-phosphate 3-phosphatidyltransferase (pgsA) (Rickettsia prowazekii (strain Madrid E)).